The sequence spans 278 residues: S-formylglutathione hydrolase YeiG (278 aa).

Active-site charge relay system residues include Ser145, Asp223, and His256.

It belongs to the esterase D family.

The enzyme catalyses S-formylglutathione + H2O = formate + glutathione + H(+). Functionally, serine hydrolase involved in the detoxification of formaldehyde. Hydrolyzes S-formylglutathione to glutathione and formate. The sequence is that of S-formylglutathione hydrolase YeiG (yeiG) from Escherichia coli O139:H28 (strain E24377A / ETEC).